We begin with the raw amino-acid sequence, 264 residues long: Acyl-[acyl-carrier-protein]--UDP-N-acetylglucosamine O-acyltransferase (264 aa).

It belongs to the transferase hexapeptide repeat family. LpxA subfamily. Homotrimer.

The protein localises to the cytoplasm. It catalyses the reaction a (3R)-hydroxyacyl-[ACP] + UDP-N-acetyl-alpha-D-glucosamine = a UDP-3-O-[(3R)-3-hydroxyacyl]-N-acetyl-alpha-D-glucosamine + holo-[ACP]. It functions in the pathway glycolipid biosynthesis; lipid IV(A) biosynthesis; lipid IV(A) from (3R)-3-hydroxytetradecanoyl-[acyl-carrier-protein] and UDP-N-acetyl-alpha-D-glucosamine: step 1/6. Functionally, involved in the biosynthesis of lipid A, a phosphorylated glycolipid that anchors the lipopolysaccharide to the outer membrane of the cell. The protein is Acyl-[acyl-carrier-protein]--UDP-N-acetylglucosamine O-acyltransferase of Haemophilus ducreyi (strain 35000HP / ATCC 700724).